A 497-amino-acid polypeptide reads, in one-letter code: UPF0371 protein cu0538 (497 aa).

This sequence belongs to the UPF0371 family.

The chain is UPF0371 protein cu0538 from Corynebacterium urealyticum (strain ATCC 43042 / DSM 7109).